The sequence spans 457 residues: Siroheme synthase (457 aa).

A precorrin-2 dehydrogenase /sirohydrochlorin ferrochelatase region spans residues 1-204 (MDHLPIFCQL…NDQKAITETT (204 aa)). Residues 22 to 23 (DV) and 43 to 44 (LA) contribute to the NAD(+) site. S128 is subject to Phosphoserine. Positions 216–457 (GEVVLVGAGP…RDKLNWFSNH (242 aa)) are uroporphyrinogen-III C-methyltransferase. P225 lines the S-adenosyl-L-methionine pocket. The active-site Proton acceptor is D248. Residue K270 is the Proton donor of the active site. S-adenosyl-L-methionine-binding positions include 301-303 (GGD), I306, 331-332 (TA), M382, and G411.

It in the N-terminal section; belongs to the precorrin-2 dehydrogenase / sirohydrochlorin ferrochelatase family. In the C-terminal section; belongs to the precorrin methyltransferase family.

The enzyme catalyses uroporphyrinogen III + 2 S-adenosyl-L-methionine = precorrin-2 + 2 S-adenosyl-L-homocysteine + H(+). It catalyses the reaction precorrin-2 + NAD(+) = sirohydrochlorin + NADH + 2 H(+). It carries out the reaction siroheme + 2 H(+) = sirohydrochlorin + Fe(2+). The protein operates within cofactor biosynthesis; adenosylcobalamin biosynthesis; precorrin-2 from uroporphyrinogen III: step 1/1. Its pathway is cofactor biosynthesis; adenosylcobalamin biosynthesis; sirohydrochlorin from precorrin-2: step 1/1. It participates in porphyrin-containing compound metabolism; siroheme biosynthesis; precorrin-2 from uroporphyrinogen III: step 1/1. It functions in the pathway porphyrin-containing compound metabolism; siroheme biosynthesis; siroheme from sirohydrochlorin: step 1/1. The protein operates within porphyrin-containing compound metabolism; siroheme biosynthesis; sirohydrochlorin from precorrin-2: step 1/1. Multifunctional enzyme that catalyzes the SAM-dependent methylations of uroporphyrinogen III at position C-2 and C-7 to form precorrin-2 via precorrin-1. Then it catalyzes the NAD-dependent ring dehydrogenation of precorrin-2 to yield sirohydrochlorin. Finally, it catalyzes the ferrochelation of sirohydrochlorin to yield siroheme. The protein is Siroheme synthase of Shigella flexneri.